We begin with the raw amino-acid sequence, 867 residues long: Bifunctional isopimaradiene synthase, chloroplastic (867 aa).

A chloroplast-targeting transit peptide spans 1–68 (MALLSSSLSS…VGEGTTSLPY (68 aa)). Residue Lys-267 coordinates substrate. Mg(2+) is bound by residues Asp-400 and Asp-402. The DXDD motif motif lies at 400-403 (DIDD). Lys-487 provides a ligand contact to substrate. Mg(2+)-binding residues include Asp-619, Asp-623, Asn-763, Thr-767, and Glu-771. The DDXXD motif signature appears at 619–623 (DDLYD).

This sequence belongs to the terpene synthase family. Tpsd subfamily. It depends on Mg(2+) as a cofactor.

Its subcellular location is the plastid. It localises to the chloroplast. It catalyses the reaction (2E,6E,10E)-geranylgeranyl diphosphate = (+)-copalyl diphosphate. The catalysed reaction is (+)-copalyl diphosphate = isopimara-7,15-diene + diphosphate. Its pathway is terpene metabolism; oleoresin biosynthesis. Its function is as follows. Involved in defensive oleoresin formation in conifers in response to insect attack or other injury. Involved in diterpene (C20) olefins biosynthesis. Bifunctional enzyme that catalyzes two sequential cyclizations of geranylgeranyl diphosphate (GGPP) to isopimara-7,15-diene. In Picea abies (Norway spruce), this protein is Bifunctional isopimaradiene synthase, chloroplastic (TPS-ISO).